The following is a 529-amino-acid chain: Beta-galactoside alpha-2,6-sialyltransferase 2 (529 aa).

The Cytoplasmic segment spans residues 1-11 (MKPHLKQWRQR). A helical; Signal-anchor for type II membrane protein membrane pass occupies residues 12 to 32 (MLFGIFAWGLLFLLIFIYFTD). At 33–529 (SNPAEPVPSS…PAPSPVIPHS (497 aa)) the chain is on the lumenal side. Serine 69 carries O-linked (GalNAc...) serine glycosylation. The N-linked (GlcNAc...) asparagine glycan is linked to asparagine 211. 3 disulfides stabilise this stretch: cysteine 253/cysteine 519, cysteine 296/cysteine 448, and cysteine 466/cysteine 477.

It belongs to the glycosyltransferase 29 family. Post-translationally, O-glycosylated. Weakly expressed in some tissues, such as small intestine, colon and fetal brain.

The protein resides in the golgi apparatus. The protein localises to the golgi stack membrane. It catalyses the reaction a beta-D-galactoside + CMP-N-acetyl-beta-neuraminate = an N-acetyl-alpha-neuraminyl-(2-&gt;6)-beta-D-galactosyl derivative + CMP + H(+). Functionally, transfers sialic acid from the donor of substrate CMP-sialic acid to galactose containing acceptor substrates. Has alpha-2,6-sialyltransferase activity toward oligosaccharides that have the Gal-beta-1,4-GlcNAc sequence at the non-reducing end of their carbohydrate groups, but it has weak or no activities toward glycoproteins and glycolipids. This chain is Beta-galactoside alpha-2,6-sialyltransferase 2 (ST6GAL2), found in Homo sapiens (Human).